A 125-amino-acid chain; its full sequence is Protein ApaG (125 aa).

One can recognise an ApaG domain in the interval Thr-3 to Asn-125.

This chain is Protein ApaG, found in Anaeromyxobacter dehalogenans (strain 2CP-C).